The chain runs to 444 residues: Bifunctional enolase 2/transcriptional activator (444 aa).

Positions 163 and 172 each coordinate substrate. Glutamate 215 functions as the Proton donor in the catalytic mechanism. Residues aspartate 250, glutamate 300, and aspartate 327 each contribute to the Mg(2+) site. Substrate contacts are provided by glutamate 300 and aspartate 327. Lysine 352 serves as the catalytic Proton acceptor. Residues 379 to 382 (SHRS) and lysine 403 each bind substrate.

The protein belongs to the enolase family. Homodimer. Mg(2+) is required as a cofactor.

The protein localises to the cytoplasm. Its subcellular location is the cytosol. It is found in the nucleus. The protein resides in the mitochondrion outer membrane. The catalysed reaction is (2R)-2-phosphoglycerate = phosphoenolpyruvate + H2O. It participates in carbohydrate degradation; glycolysis; pyruvate from D-glyceraldehyde 3-phosphate: step 4/5. Its function is as follows. Multifunctional enzyme that acts as an enolase involved in the metabolism and as a positive regulator of cold-responsive gene transcription. Binds to the cis-element the gene promoter of STZ/ZAT10, a zinc finger transcriptional repressor. The polypeptide is Bifunctional enolase 2/transcriptional activator (ENO2) (Arabidopsis thaliana (Mouse-ear cress)).